The sequence spans 172 residues: 3-hydroxydecanoyl-[acyl-carrier-protein] dehydratase (172 aa).

The active site involves H70.

The protein belongs to the thioester dehydratase family. FabA subfamily. As to quaternary structure, homodimer.

It is found in the cytoplasm. The enzyme catalyses a (3R)-hydroxyacyl-[ACP] = a (2E)-enoyl-[ACP] + H2O. The catalysed reaction is (3R)-hydroxydecanoyl-[ACP] = (2E)-decenoyl-[ACP] + H2O. It carries out the reaction (2E)-decenoyl-[ACP] = (3Z)-decenoyl-[ACP]. It functions in the pathway lipid metabolism; fatty acid biosynthesis. Functionally, necessary for the introduction of cis unsaturation into fatty acids. Catalyzes the dehydration of (3R)-3-hydroxydecanoyl-ACP to E-(2)-decenoyl-ACP and then its isomerization to Z-(3)-decenoyl-ACP. Can catalyze the dehydratase reaction for beta-hydroxyacyl-ACPs with saturated chain lengths up to 16:0, being most active on intermediate chain length. The polypeptide is 3-hydroxydecanoyl-[acyl-carrier-protein] dehydratase (Xylella fastidiosa (strain M23)).